The chain runs to 319 residues: Thioredoxin reductase (319 aa).

Residues 11–14 (SGPA), 40–41 (VA), Gln45, Asn54, Val87, Cys145, Asp288, and 295–297 (RQA) each bind FAD. A disulfide bridge links Cys142 with Cys145.

The protein belongs to the class-II pyridine nucleotide-disulfide oxidoreductase family. Homodimer. FAD serves as cofactor.

The protein localises to the cytoplasm. It carries out the reaction [thioredoxin]-dithiol + NADP(+) = [thioredoxin]-disulfide + NADPH + H(+). This chain is Thioredoxin reductase (TRR1), found in Eremothecium gossypii (strain ATCC 10895 / CBS 109.51 / FGSC 9923 / NRRL Y-1056) (Yeast).